Consider the following 469-residue polypeptide: Cysteine protease ATG4D (469 aa).

The span at 1–29 (MNSVSPLATQYGSPKGSQQMENRSTQSGG) shows a compositional bias: polar residues. The disordered stretch occupies residues 1 to 41 (MNSVSPLATQYGSPKGSQQMENRSTQSGGHEQRKMGHQDAT). The Nucleophile role is filled by cysteine 131. The disordered stretch occupies residues 169–191 (IRSSSPPSMPLSSLATGHSAGDY). A compositionally biased stretch (low complexity) spans 171 to 182 (SSSPPSMPLSSL). Active-site residues include aspartate 356 and histidine 358. Residues 436-469 (QEYAEGPQSSSHPPVCRKKGPLVKRPSSDEFEFL) form a disordered region.

It belongs to the peptidase C54 family.

The protein resides in the cytoplasm. It catalyses the reaction [protein]-C-terminal L-amino acid-glycyl-phosphatidylethanolamide + H2O = [protein]-C-terminal L-amino acid-glycine + a 1,2-diacyl-sn-glycero-3-phosphoethanolamine. The enzyme catalyses [protein]-C-terminal L-amino acid-glycyl-phosphatidylserine + H2O = [protein]-C-terminal L-amino acid-glycine + a 1,2-diacyl-sn-glycero-3-phospho-L-serine. Cysteine protease that plays a key role in autophagy by mediating both proteolytic activation and delipidation of ATG8 family proteins. The protease activity is required for proteolytic activation of ATG8 family proteins to reveal a C-terminal glycine. Exposure of the glycine at the C-terminus is essential for ATG8 proteins conjugation to phosphatidylethanolamine (PE) and insertion to membranes, which is necessary for autophagy. In addition to the protease activity, also mediates delipidation of ATG8 family proteins. Catalyzes delipidation of PE-conjugated forms of ATG8 proteins during macroautophagy. Also involved in non-canonical autophagy, a parallel pathway involving conjugation of ATG8 proteins to single membranes at endolysosomal compartments, by catalyzing delipidation of ATG8 proteins conjugated to phosphatidylserine (PS). The chain is Cysteine protease ATG4D from Xenopus laevis (African clawed frog).